Reading from the N-terminus, the 87-residue chain is MVNMKASMFLTFAGLVLLFVVCYASGSEEKEFPKEMLSSIFAVDNDFKQEERDCAGYMRECKEKLCCSGYVCSSRWKWCVLPAPWRR.

Positions 1–24 (MVNMKASMFLTFAGLVLLFVVCYA) are cleaved as a signal peptide. The propeptide occupies 25–52 (SGSEEKEFPKEMLSSIFAVDNDFKQEER). Intrachain disulfides connect Cys-54–Cys-67, Cys-61–Cys-72, and Cys-66–Cys-79.

This sequence belongs to the neurotoxin 10 (Hwtx-1) family. 51 (Hntx-8) subfamily. Hntx-8 sub-subfamily. In terms of tissue distribution, expressed by the venom gland.

It is found in the secreted. Ion channel inhibitor. The protein is U3-theraphotoxin-Hhn1a 8 of Cyriopagopus hainanus (Chinese bird spider).